We begin with the raw amino-acid sequence, 334 residues long: Formamidase (334 aa).

The region spanning 14-260 (MLMGLVQYPV…WEIVTAEVFP (247 aa)) is the CN hydrolase domain. The Proton acceptor role is filled by glutamate 60. Lysine 133 serves as the catalytic Proton donor. Cysteine 166 acts as the Nucleophile in catalysis.

Belongs to the carbon-nitrogen hydrolase superfamily. Aliphatic amidase family.

It catalyses the reaction formamide + H2O = formate + NH4(+). Its function is as follows. Is an aliphatic amidase with a restricted substrate specificity, as it only hydrolyzes formamide. This chain is Formamidase, found in Nitratidesulfovibrio vulgaris (strain DP4) (Desulfovibrio vulgaris).